The sequence spans 117 residues: Big defensin (117 aa).

The N-terminal stretch at 1-23 is a signal peptide; the sequence is MKGNIGIAVFYMLLLLLPTDSIG. The propeptide occupies 26–36; sequence MEEEQEKLFRQ. 3 cysteine pairs are disulfide-bonded: cysteine 83/cysteine 113, cysteine 90/cysteine 108, and cysteine 94/cysteine 114.

Belongs to the big defensin family. Interacts with intracellular coagulation inhibitor 1/LICI-1. Expressed in all tissues examined, including hemocytes, heart, hepatopancreas, stomach, intestine and skeletal muscle.

Its subcellular location is the secreted. Significantly inhibits the growth of Gram-negative and Gram-positive bacteria and fungi in vitro. The polypeptide is Big defensin (Tachypleus tridentatus (Japanese horseshoe crab)).